Consider the following 459-residue polypeptide: Cysteine--tRNA ligase (459 aa).

Cys-28 contacts Zn(2+). Residues 30–40 (VTVYDLCHFGH) carry the 'HIGH' region motif. Residues Cys-209, His-234, and Glu-238 each coordinate Zn(2+). Residues 266–270 (KMSKS) carry the 'KMSKS' region motif. Lys-269 is a binding site for ATP.

This sequence belongs to the class-I aminoacyl-tRNA synthetase family. In terms of assembly, monomer. Zn(2+) is required as a cofactor.

It is found in the cytoplasm. It carries out the reaction tRNA(Cys) + L-cysteine + ATP = L-cysteinyl-tRNA(Cys) + AMP + diphosphate. This is Cysteine--tRNA ligase from Glaesserella parasuis serovar 5 (strain SH0165) (Haemophilus parasuis).